Consider the following 737-residue polypeptide: Aryl hydrocarbon receptor nuclear translocator 2 (737 aa).

The tract at residues 1-73 (MATPAAVNPS…SRYDDDQIPG (73 aa)) is disordered. Basic and acidic residues predominate over residues 64–73 (SRYDDDQIPG). Residues 78 to 131 (YARENHSEIERRRRNKMTQYITELSDMVPTCSALARKPDKLTILRMAVSHMKSM) form the bHLH domain. PAS domains lie at 149–221 (TEQE…ENSM) and 340–406 (SMDM…QVVK). Residues 413–456 (SVMYRFRMKNREWMLIRTSSFTFQNPYSDEIEYIICTNTNVKQL) form the PAC domain. Disordered stretches follow at residues 525-556 (MMVPSSTSGGQQLYSQGSPFQPGHSGKSFSSS) and 588-721 (QVSW…TTNY). 2 stretches are compositionally biased toward polar residues: residues 528 to 543 (PSSTSGGQQLYSQGSP) and 588 to 626 (QVSWSGNRPPFSGQQIPAQSNKAQSSPFGIGSSHSYQAD). The span at 627–642 (PSSYSPLSSPATSSPS) shows a compositional bias: low complexity. Residues 643 to 656 (GNAYSNLANRNTAF) are compositionally biased toward polar residues. Low complexity predominate over residues 659–688 (SGESSQSGGQFQGRPSEVWSQWQSQHHSQQ).

In terms of assembly, efficient DNA binding requires dimerization with another bHLH protein. Heterodimer with the aryl hydrocarbon receptor (AHR), SIM1 or HIF2A/EPAS-1. Isoform 1 and isoform 2 are most highly expressed in the brain, eye and skeletal muscle and to a lower degree in liver, heart, kidney and swim bladder. Isoform 3 is most highly expressed in the eye, forebrain, midbrain, hindbrain, skeletal muscle, gills and brain but is barely detectable in liver, heart, kidney and swim bladder. Before the pharyngula period isoform 3 is expressed throughout the entire embryo and during this period extensively in the brain and eye.

It localises to the nucleus. Its function is as follows. Transcription factor that plays a role in the development of the hypothalamo-pituitary axis. Specifically recognizes the xenobiotic response element (XRE). Isoform 1 acts as a transcriptional activator. Isoform 3 acts as a transcriptional repressor. This chain is Aryl hydrocarbon receptor nuclear translocator 2, found in Danio rerio (Zebrafish).